The chain runs to 38 residues: Large ribosomal subunit protein bL36 (38 aa).

It belongs to the bacterial ribosomal protein bL36 family.

The chain is Large ribosomal subunit protein bL36 from Phytoplasma mali (strain AT).